Consider the following 618-residue polypeptide: MSFLVLPPEVNSALMFAGAGSGPTLAAAAAWDGLAAELGQAANSFSSATAALADTAWQGPAATAMAAAAAPYASWLSTAATRALSAAAQAKAAAAVYEAARAATVDPLLVAANRHQLVSLVLSNLFGQNAPAIAATEAAYEQLWAADVAAMVSYHSGASAVAAQLAPWAQAVRALPNPTAPALASGPAALAIPALGIGNTGIGNIFSIGNIGDYNLGNGNTGNANLGSGNTGQANLGSGNTGFFNFGSGNTANTNFGSGNLGNLNLGSGNDGNGNFGLGNIGDGNRGSGNVGSFNFGTANAGSFNVGSANHGSPNVGFANLGNNNLGIANLGNNNLGIANLGNNNIGIGLTGDNMIGIGALNSGIGNLGFGNSGNNNIGLFNSGNNNIGFFNSGDSNFGFFNSGDTNTGFGNAGFTNTGFGNAGSGNFGFGNAGNNNFGFGNSGFENMGVGNSGAYNTGSFNSGTLNTGDLNSGDFNTGWANSGDINTGGFHSGDLNTGFGSPVDQPVMNSGFGNIGTGNSGFNNSGDANSGFQNTNTGAFFIGHSGLLNSGGGQHVGISNSGTGFNTGLFNTGFNNTGIGNSATNAAFTTTSGVANSGDNSSGGFNAGNDQSGFFDG.

Residues 1–29 form the signal peptide; the sequence is MSFLVLPPEVNSALMFAGAGSGPTLAAAA. The tract at residues 598–618 is disordered; that stretch reads SGDNSSGGFNAGNDQSGFFDG.

The protein belongs to the mycobacterial PPE family.

This is an uncharacterized protein from Mycobacterium tuberculosis (strain ATCC 25618 / H37Rv).